A 329-amino-acid polypeptide reads, in one-letter code: Carbohydrate sulfotransferase chst-1 (329 aa).

At 1–3 (MLK) the chain is on the cytoplasmic side. A helical; Signal-anchor for type II membrane protein transmembrane segment spans residues 4 to 23 (WFIISCCLLTAISYSTYYLF). The Lumenal segment spans residues 24–329 (TSNSWIKTVK…FDFDTTFINS (306 aa)). Residues 91–97 (KKSMSTL) and 157–165 (RDPIARFIS) each bind 3'-phosphoadenylyl sulfate.

This sequence belongs to the sulfotransferase 2 family. As to expression, highly expressed in the head and tail of hermaphrodites, in particular in amphid and phasmid sheath cells.

It is found in the golgi apparatus membrane. It carries out the reaction chondroitin beta-D-glucuronate + n 3'-phosphoadenylyl sulfate = chondroitin 4'-sulfate + n adenosine 3',5'-bisphosphate + n H(+). Functionally, catalyzes the transfer of sulfate to position 4 of non-reducing N-acetylgalactosamine (GalNAc) residue of chondroitin. This is Carbohydrate sulfotransferase chst-1 from Caenorhabditis elegans.